Reading from the N-terminus, the 399-residue chain is Mitochondrial glycine transporter (399 aa).

Solcar repeat units lie at residues 35–137 (IPPY…LRSV), 164–251 (LSTT…CKTN), and 266–374 (GNWM…GRSW). 6 helical membrane-spanning segments follow: residues 41-66 (LAFGALSGFASCVLLQPFDLLKTRLQ), 112-138 (GTAPTVIRNVPGVALYFYSVSHLRSVA), 170-195 (LLTGAVARVTVGFILSPVTVVKARFE), 226-249 (GFTATALRDAPYAGLYLALYEACK), 270-296 (VVSASGLLAGTLATLLTHPFDIIKTRM), and 349-367 (GLGLRCARKAASSAIGWSI). Positions 379 to 399 (EASSSAQEAGTGTRLLDHKQV) are disordered.

This sequence belongs to the mitochondrial carrier (TC 2.A.29) family. SLC25A38 subfamily.

Its subcellular location is the mitochondrion inner membrane. The catalysed reaction is glycine(in) = glycine(out). Mitochondrial glycine transporter that imports glycine into the mitochondrial matrix. Plays an important role in providing glycine for the first enzymatic step in heme biosynthesis, the condensation of glycine with succinyl-CoA to produce 5-aminolevulinate (ALA) in the mitochondrial matrix. This Mycosarcoma maydis (Corn smut fungus) protein is Mitochondrial glycine transporter.